A 577-amino-acid chain; its full sequence is MFS-type transporter CPUR_05422 (577 aa).

The interval 1–49 (MSAMSAMGKPEHGSATTSDLEHRATESSLEKQDVEAAPPGPVKPVDPSP) is disordered. Residues 19–34 (DLEHRATESSLEKQDV) show a composition bias toward basic and acidic residues. The span at 38–47 (PPGPVKPVDP) shows a compositional bias: pro residues. 14 helical membrane-spanning segments follow: residues 52-72 (STLK…LVAV), 93-113 (DVGW…LLFG), 123-143 (VVLL…GAAP), 157-177 (VGSA…IPLA), 184-204 (GLMG…GGAF), 212-232 (WCFY…FFYF), 249-269 (ILSL…CLLL), 285-305 (IIVL…VQIC), 326-346 (FLTT…IPIW), 359-379 (GIQL…GGLL), 383-403 (IGYY…GAGL), 416-436 (VIGY…TPNL), 449-469 (MGIA…VAVG), and 525-545 (VFIV…CMEW). The tract at residues 554–577 (PPAGPPAGAPTESAPVETKAAGHT) is disordered.

The protein belongs to the major facilitator superfamily. TCR/Tet family.

It is found in the membrane. In terms of biological role, MFS-type transporter; part of the ergochrome gene cluster responsible for the typical purple-black color of the ergot sclerotia. The ergochrome gene cluster produces several ergot pigments including the yellow ergochrome secalonic acid and its derivatives, as well as the red anthraquinones endocrocin and clavorubin. This chain is MFS-type transporter CPUR_05422, found in Claviceps purpurea (strain 20.1) (Ergot fungus).